A 371-amino-acid chain; its full sequence is Dual-specificity RNA methyltransferase RlmN (371 aa).

The active-site Proton acceptor is Glu-114. In terms of domain architecture, Radical SAM core spans 120-352 (EEDHFTLCVS…VMTRQSKGAD (233 aa)). Residues Cys-127 and Cys-357 are joined by a disulfide bond. The [4Fe-4S] cluster site is built by Cys-134, Cys-138, and Cys-141. Residues 183 to 184 (GE), Ser-216, 238 to 240 (SLN), and Asn-314 contribute to the S-adenosyl-L-methionine site. Cys-357 (S-methylcysteine intermediate) is an active-site residue.

The protein belongs to the radical SAM superfamily. RlmN family. The cofactor is [4Fe-4S] cluster.

The protein resides in the cytoplasm. It catalyses the reaction adenosine(2503) in 23S rRNA + 2 reduced [2Fe-2S]-[ferredoxin] + 2 S-adenosyl-L-methionine = 2-methyladenosine(2503) in 23S rRNA + 5'-deoxyadenosine + L-methionine + 2 oxidized [2Fe-2S]-[ferredoxin] + S-adenosyl-L-homocysteine. The enzyme catalyses adenosine(37) in tRNA + 2 reduced [2Fe-2S]-[ferredoxin] + 2 S-adenosyl-L-methionine = 2-methyladenosine(37) in tRNA + 5'-deoxyadenosine + L-methionine + 2 oxidized [2Fe-2S]-[ferredoxin] + S-adenosyl-L-homocysteine. Its function is as follows. Specifically methylates position 2 of adenine 2503 in 23S rRNA and position 2 of adenine 37 in tRNAs. m2A2503 modification seems to play a crucial role in the proofreading step occurring at the peptidyl transferase center and thus would serve to optimize ribosomal fidelity. The polypeptide is Dual-specificity RNA methyltransferase RlmN (Desulfosudis oleivorans (strain DSM 6200 / JCM 39069 / Hxd3) (Desulfococcus oleovorans)).